The primary structure comprises 1868 residues: Protein TIC 214 (1868 aa).

A run of 6 helical transmembrane segments spans residues 11-31, 64-84, 87-107, 126-146, 166-186, and 221-241; these read LLLLWMNIVNSVVLVGLYYGF, FIMGQFIIFISTYYPPLHLAL, PHTLTVLVLPYLLLHFLFFWN, LSIQYVFLNNLIFQLFNHFIL, ILFVISSFFGWLIGHILLMKS, and IFSILLFITCVCYLGRMPSPI. The segment covering 248–276 has biased composition (basic and acidic residues); the sequence is ESSKGEEKKKTEKERDVEMETISKTKKIE. Disordered stretches follow at residues 248-277, 617-643, 658-700, 782-806, and 1537-1607; these read ESSKGEEKKKTEKERDVEMETISKTKKIEQ, FDFEEEEEEEEEEDDEEEPTDDHGIRS, DEDT…QAEE, TSDYAGEGAKEEEHEEEKREYKRKE, and YIDP…RKKK. The span at 617–636 shows a compositional bias: acidic residues; it reads FDFEEEEEEEEEEDDEEEPT. A compositionally biased stretch (polar residues) spans 674–683; sequence AKNSDQAKNS. 3 stretches are compositionally biased toward basic and acidic residues: residues 684–700, 789–806, and 1537–1576; these read DQAKKSDQAKNSDQAEE, GAKEEEHEEEKREYKRKE, and YIDPKVKSNQKERSNPKAESNQKEYLELENRNRDEKERQH.

Belongs to the TIC214 family. In terms of assembly, part of the Tic complex.

The protein resides in the plastid. Its subcellular location is the chloroplast inner membrane. In terms of biological role, involved in protein precursor import into chloroplasts. May be part of an intermediate translocation complex acting as a protein-conducting channel at the inner envelope. The chain is Protein TIC 214 from Nuphar advena (Common spatterdock).